We begin with the raw amino-acid sequence, 341 residues long: tRNA N6-adenosine threonylcarbamoyltransferase (341 aa).

Fe cation contacts are provided by His112 and His116. Residues 134–138 (LASGG), Asp167, Gly180, and Asn279 each bind substrate. Fe cation is bound at residue Asp307.

It belongs to the KAE1 / TsaD family. Requires Fe(2+) as cofactor.

The protein resides in the cytoplasm. The enzyme catalyses L-threonylcarbamoyladenylate + adenosine(37) in tRNA = N(6)-L-threonylcarbamoyladenosine(37) in tRNA + AMP + H(+). Functionally, required for the formation of a threonylcarbamoyl group on adenosine at position 37 (t(6)A37) in tRNAs that read codons beginning with adenine. Is involved in the transfer of the threonylcarbamoyl moiety of threonylcarbamoyl-AMP (TC-AMP) to the N6 group of A37, together with TsaE and TsaB. TsaD likely plays a direct catalytic role in this reaction. This is tRNA N6-adenosine threonylcarbamoyltransferase from Rickettsia bellii (strain OSU 85-389).